Reading from the N-terminus, the 502-residue chain is Beta-glucosidase 7 (502 aa).

The N-terminal stretch at 1 to 22 (MKPFSQFFVFVVTVSATSYIDA) is a signal peptide. A beta-D-glucoside-binding positions include Gln42, His140, and 185–186 (NE). The active-site Proton donor is Glu186. Asn208 is a glycosylation site (N-linked (GlcNAc...) asparagine). Position 325 (Tyr325) interacts with a beta-D-glucoside. Asn359 carries N-linked (GlcNAc...) asparagine glycosylation. Glu392 is an a beta-D-glucoside binding site. The active-site Nucleophile is the Glu392. Asn425 carries N-linked (GlcNAc...) asparagine glycosylation. Residues Trp435 and Tyr451 each contribute to the a beta-D-glucoside site. 2 N-linked (GlcNAc...) asparagine glycosylation sites follow: Asn457 and Asn479.

It belongs to the glycosyl hydrolase 1 family.

The enzyme catalyses Hydrolysis of terminal, non-reducing beta-D-glucosyl residues with release of beta-D-glucose.. The chain is Beta-glucosidase 7 from Arabidopsis thaliana (Mouse-ear cress).